The primary structure comprises 225 residues: Cytidylate kinase (225 aa).

11–19 contributes to the ATP binding site; the sequence is GPSGAGKGT.

Belongs to the cytidylate kinase family. Type 1 subfamily.

It localises to the cytoplasm. The catalysed reaction is CMP + ATP = CDP + ADP. The enzyme catalyses dCMP + ATP = dCDP + ADP. In Mannheimia succiniciproducens (strain KCTC 0769BP / MBEL55E), this protein is Cytidylate kinase.